Reading from the N-terminus, the 144-residue chain is Large ribosomal subunit protein uL11 (144 aa).

Belongs to the universal ribosomal protein uL11 family. In terms of assembly, part of the ribosomal stalk of the 50S ribosomal subunit. Interacts with L10 and the large rRNA to form the base of the stalk. L10 forms an elongated spine to which L12 dimers bind in a sequential fashion forming a multimeric L10(L12)X complex. Contacts the CTC protein (RL25). Post-translationally, one or more lysine residues are methylated.

Its function is as follows. Forms part of the ribosomal stalk which helps the ribosome interact with GTP-bound translation factors. In Deinococcus radiodurans (strain ATCC 13939 / DSM 20539 / JCM 16871 / CCUG 27074 / LMG 4051 / NBRC 15346 / NCIMB 9279 / VKM B-1422 / R1), this protein is Large ribosomal subunit protein uL11.